The sequence spans 421 residues: UDP-N-acetylglucosamine 1-carboxyvinyltransferase (421 aa).

22–23 (KN) contacts phosphoenolpyruvate. A UDP-N-acetyl-alpha-D-glucosamine-binding site is contributed by arginine 93. The active-site Proton donor is cysteine 117. At cysteine 117 the chain carries 2-(S-cysteinyl)pyruvic acid O-phosphothioketal. Residues 122–126 (RPVDL), aspartate 308, and valine 330 contribute to the UDP-N-acetyl-alpha-D-glucosamine site.

It belongs to the EPSP synthase family. MurA subfamily.

It localises to the cytoplasm. It carries out the reaction phosphoenolpyruvate + UDP-N-acetyl-alpha-D-glucosamine = UDP-N-acetyl-3-O-(1-carboxyvinyl)-alpha-D-glucosamine + phosphate. The protein operates within cell wall biogenesis; peptidoglycan biosynthesis. Functionally, cell wall formation. Adds enolpyruvyl to UDP-N-acetylglucosamine. This is UDP-N-acetylglucosamine 1-carboxyvinyltransferase from Pseudomonas aeruginosa (strain LESB58).